Reading from the N-terminus, the 264-residue chain is MSSTQEDQPNPDFEIDHPEAYSQYFLTAPREISFYLNLLVKRGSLLTAHIDDGKAFFLTTMIAVDDEKQAIFLDSAQADELNTAAKNAHRITLTAKLDRVKIQLRLPPLRHQLVDGQKMLVAAFPQAILRIQRREFFRLESSSAHPILCRIAMEAPEGTLKTFEWNVADISGGGLSLNAPTSLINDCQRDALFKNSRLDIPGEGVLLVNLRVRKTSEFSAENGQHYLRVGCEFVELPGSRLAMIERYIARIERERKARDSGLAN.

The region spanning 132 to 249 (QRREFFRLES…RLAMIERYIA (118 aa)) is the PilZ domain.

It belongs to the YcgR family. In terms of assembly, monomer. Interacts with the flagellar basal bodies.

It localises to the bacterial flagellum basal body. Its function is as follows. Acts as a flagellar brake, regulating swimming and swarming in a bis-(3'-5') cyclic diguanylic acid (c-di-GMP)-dependent manner. Binds 1 c-di-GMP dimer per subunit. Increasing levels of c-di-GMP lead to decreased motility. The chain is Flagellar brake protein YcgR 1 from Dechloromonas aromatica (strain RCB).